Here is a 466-residue protein sequence, read N- to C-terminus: Cysteine--tRNA ligase (466 aa).

Position 28 (Cys-28) interacts with Zn(2+). The short motif at 30 to 40 (PTVYNYIHIGN) is the 'HIGH' region element. Positions 208, 233, and 237 each coordinate Zn(2+). A 'KMSKS' region motif is present at residues 265–269 (KMSKS). Residue Lys-268 coordinates ATP.

Belongs to the class-I aminoacyl-tRNA synthetase family. As to quaternary structure, monomer. Requires Zn(2+) as cofactor.

It localises to the cytoplasm. It carries out the reaction tRNA(Cys) + L-cysteine + ATP = L-cysteinyl-tRNA(Cys) + AMP + diphosphate. This chain is Cysteine--tRNA ligase, found in Staphylococcus aureus (strain MSSA476).